A 583-amino-acid chain; its full sequence is MESKGASSCRLLFCLLISATVFRPGLGWYTVNSAYGDTIIIPCRLDVPQNLMFGKWKYEKPDGSPVFIAFRSSTKKSVQYDDVPEYKDRLNLSENYTLSISNARISDEKRFVCMLVTEDNVFEAPTIVKVFKQPSKPEIVSKALFLETEQLKKLGDCISEDSYPDGNITWYRNGKVLHPLEGAVVIIFKKEMDPVTQLYTMTSTLEYKTTKADIQMPFTCSVTYYGPSGQKTIHSEQAVFDIYYPTEQVTIQVLPPKNAIKEGDNITLKCLGNGNPPPEEFLFYLPGQPEGIRSSNTYTLTDVRRNATGDYKCSLIDKKSMIASTAITVHYLDLSLNPSGEVTRQIGDALPVSCTISASRNATVVWMKDNIRLRSSPSFSSLHYQDAGNYVCETALQEVEGLKKRESLTLIVEGKPQIKMTKKTDPSGLSKTIICHVEGFPKPAIQWTITGSGSVINQTEESPYINGRYYSKIIISPEENVTLTCTAENQLERTVNSLNVSAISIPEHDEADEISDENREKVNDQAKLIVGIVVGLLLAALVAGVVYWLYMKKSKTASKHVNKDLGNMEENKKLEENNHKTEA.

A signal peptide spans 1 to 27 (MESKGASSCRLLFCLLISATVFRPGLG). Ig-like V-type domains lie at 28-120 (WYTV…TEDN) and 125-234 (PTIV…KTIH). At 28-527 (WYTVNSAYGD…NREKVNDQAK (500 aa)) the chain is on the extracellular side. 2 disulfides stabilise this stretch: Cys43/Cys113 and Cys157/Cys220. 9 N-linked (GlcNAc...) asparagine glycosylation sites follow: Asn91, Asn95, Asn167, Asn265, Asn306, Asn361, Asn457, Asn480, and Asn499. Ig-like C2-type domains lie at 245 to 328 (PTEQ…TAIT), 333 to 409 (DLSL…ESLT), and 416 to 501 (PQIK…LNVS). Disulfide bonds link Cys270-Cys313, Cys354-Cys392, and Cys435-Cys485. The helical transmembrane segment at 528–549 (LIVGIVVGLLLAALVAGVVYWL) threads the bilayer. Residues 550 to 583 (YMKKSKTASKHVNKDLGNMEENKKLEENNHKTEA) lie on the Cytoplasmic side of the membrane. Residues 562–583 (NKDLGNMEENKKLEENNHKTEA) are disordered. The span at 569 to 583 (EENKKLEENNHKTEA) shows a compositional bias: basic and acidic residues.

In terms of assembly, homodimer. Interacts (via extracellular domain) with CD6 (via extracellular domain). Homodimerization and interaction with CD6 involve the same region and cannot occur simultaneously. The affinity for CD6 is much higher than the affinity for self-association. Interacts (via glycosylated extracellular domain) with LGALS1 and LGALS3. Interaction with LGALS1 or LGALS3 inhibits interaction with CD6. Post-translationally, glycosylated. In terms of tissue distribution, detected on hematopoietic stem cells derived from umbilical cord blood. Detected on lymph vessel endothelial cells, skin and tonsil. Detected on peripheral blood monocytes. Detected on monocyte-derived dendritic cells (at protein level). Detected at low levels in spleen, placenta, liver. Expressed by activated T-cells, B-cells, monocytes and thymic epithelial cells. Isoform 1 and isoform 3 are detected in vein and artery endothelial cells, astrocytes, keratinocytes and artery smooth muscle cells. Expressed by neurons in the brain. Restricted expression in tumor cell lines. Detected in highly metastasizing melanoma cell lines.

The protein resides in the cell membrane. The protein localises to the cell projection. It is found in the axon. It localises to the dendrite. Its subcellular location is the secreted. Its function is as follows. Cell adhesion molecule that mediates both heterotypic cell-cell contacts via its interaction with CD6, as well as homotypic cell-cell contacts. Promotes T-cell activation and proliferation via its interactions with CD6. Contributes to the formation and maturation of the immunological synapse via its interactions with CD6. Mediates homotypic interactions with cells that express ALCAM. Acts as a ligand for the LILRB4 receptor, enhancing LILRB4-mediated inhibition of T cell proliferation. Required for normal hematopoietic stem cell engraftment in the bone marrow. Mediates attachment of dendritic cells onto endothelial cells via homotypic interaction. Inhibits endothelial cell migration and promotes endothelial tube formation via homotypic interactions. Required for normal organization of the lymph vessel network. Required for normal hematopoietic stem cell engraftment in the bone marrow. Plays a role in hematopoiesis; required for normal numbers of hematopoietic stem cells in bone marrow. Promotes in vitro osteoblast proliferation and differentiation. Promotes neurite extension, axon growth and axon guidance; axons grow preferentially on surfaces that contain ALCAM. Mediates outgrowth and pathfinding for retinal ganglion cell axons. In terms of biological role, inhibits activities of membrane-bound isoforms by competing for the same interaction partners. Inhibits cell attachment via homotypic interactions. Promotes endothelial cell migration. Inhibits endothelial cell tube formation. This is CD166 antigen (ALCAM) from Homo sapiens (Human).